Here is a 478-residue protein sequence, read N- to C-terminus: Chromosomal replication initiator protein DnaA (478 aa).

The domain I, interacts with DnaA modulators stretch occupies residues 1–71 (MKEFWQTCVS…EALAAEWFQR (71 aa)). The segment at 71–140 (RPVQVAFELP…DAAGVVYERS (70 aa)) is domain II. A domain III, AAA+ region region spans residues 141–357 (RLNTDLTFDN…GALRKVLAYA (217 aa)). ATP-binding residues include G185, G187, K188, and T189. Positions 358-478 (RFHGRDVLSV…LHVLEQTLKG (121 aa)) are domain IV, binds dsDNA.

The protein belongs to the DnaA family. In terms of assembly, oligomerizes as a right-handed, spiral filament on DNA at oriC.

It is found in the cytoplasm. Plays an essential role in the initiation and regulation of chromosomal replication. ATP-DnaA binds to the origin of replication (oriC) to initiate formation of the DNA replication initiation complex once per cell cycle. Binds the DnaA box (a 9 base pair repeat at the origin) and separates the double-stranded (ds)DNA. Forms a right-handed helical filament on oriC DNA; dsDNA binds to the exterior of the filament while single-stranded (ss)DNA is stabiized in the filament's interior. The ATP-DnaA-oriC complex binds and stabilizes one strand of the AT-rich DNA unwinding element (DUE), permitting loading of DNA polymerase. After initiation quickly degrades to an ADP-DnaA complex that is not apt for DNA replication. Binds acidic phospholipids. This is Chromosomal replication initiator protein DnaA from Bordetella petrii (strain ATCC BAA-461 / DSM 12804 / CCUG 43448).